The following is a 132-amino-acid chain: ATP synthase epsilon chain (132 aa).

The protein belongs to the ATPase epsilon chain family. F-type ATPases have 2 components, CF(1) - the catalytic core - and CF(0) - the membrane proton channel. CF(1) has five subunits: alpha(3), beta(3), gamma(1), delta(1), epsilon(1). CF(0) has three main subunits: a, b and c.

The protein localises to the cell inner membrane. Produces ATP from ADP in the presence of a proton gradient across the membrane. The polypeptide is ATP synthase epsilon chain (Gloeobacter violaceus (strain ATCC 29082 / PCC 7421)).